A 149-amino-acid chain; its full sequence is Early lymphoid activation gene protein (149 aa).

As to expression, expressed in heart, kidney, lung, and skeletal muscle, with lower levels in pancreas and liver.

Functionally, may function as an early signal that helps mediate the activation of T-cells. The protein is Early lymphoid activation gene protein (DIAPH2-AS1) of Homo sapiens (Human).